The sequence spans 386 residues: ORC1-type DNA replication protein 3 (386 aa).

Residues 65–69 (TGKTF) and Tyr206 contribute to the ATP site.

It belongs to the CDC6/cdc18 family.

Involved in regulation of DNA replication. This is ORC1-type DNA replication protein 3 (cdc6-3) from Sulfurisphaera tokodaii (strain DSM 16993 / JCM 10545 / NBRC 100140 / 7) (Sulfolobus tokodaii).